A 354-amino-acid chain; its full sequence is 3-dehydroquinate synthase (354 aa).

NAD(+) is bound by residues 61-66 (DGESTK), 119-120 (TT), Lys132, Lys141, and 159-162 (FLET). Glu174, His238, and His254 together coordinate Zn(2+).

It belongs to the sugar phosphate cyclases superfamily. Dehydroquinate synthase family. NAD(+) is required as a cofactor. The cofactor is Co(2+). Zn(2+) serves as cofactor.

The protein localises to the cytoplasm. It carries out the reaction 7-phospho-2-dehydro-3-deoxy-D-arabino-heptonate = 3-dehydroquinate + phosphate. The protein operates within metabolic intermediate biosynthesis; chorismate biosynthesis; chorismate from D-erythrose 4-phosphate and phosphoenolpyruvate: step 2/7. In terms of biological role, catalyzes the conversion of 3-deoxy-D-arabino-heptulosonate 7-phosphate (DAHP) to dehydroquinate (DHQ). This chain is 3-dehydroquinate synthase, found in Saccharolobus solfataricus (strain ATCC 35092 / DSM 1617 / JCM 11322 / P2) (Sulfolobus solfataricus).